Here is a 171-residue protein sequence, read N- to C-terminus: 3-hydroxydecanoyl-[acyl-carrier-protein] dehydratase (171 aa).

The active site involves histidine 70.

It belongs to the thioester dehydratase family. FabA subfamily. As to quaternary structure, homodimer.

It is found in the cytoplasm. It catalyses the reaction a (3R)-hydroxyacyl-[ACP] = a (2E)-enoyl-[ACP] + H2O. The catalysed reaction is (3R)-hydroxydecanoyl-[ACP] = (2E)-decenoyl-[ACP] + H2O. It carries out the reaction (2E)-decenoyl-[ACP] = (3Z)-decenoyl-[ACP]. It participates in lipid metabolism; fatty acid biosynthesis. Necessary for the introduction of cis unsaturation into fatty acids. Catalyzes the dehydration of (3R)-3-hydroxydecanoyl-ACP to E-(2)-decenoyl-ACP and then its isomerization to Z-(3)-decenoyl-ACP. Can catalyze the dehydratase reaction for beta-hydroxyacyl-ACPs with saturated chain lengths up to 16:0, being most active on intermediate chain length. In Pseudomonas fluorescens (strain Pf0-1), this protein is 3-hydroxydecanoyl-[acyl-carrier-protein] dehydratase.